The primary structure comprises 184 residues: ATP synthase subunit b, chloroplastic (184 aa).

The chain crosses the membrane as a helical span at residues Leu27–Leu49.

It belongs to the ATPase B chain family. As to quaternary structure, F-type ATPases have 2 components, F(1) - the catalytic core - and F(0) - the membrane proton channel. F(1) has five subunits: alpha(3), beta(3), gamma(1), delta(1), epsilon(1). F(0) has four main subunits: a(1), b(1), b'(1) and c(10-14). The alpha and beta chains form an alternating ring which encloses part of the gamma chain. F(1) is attached to F(0) by a central stalk formed by the gamma and epsilon chains, while a peripheral stalk is formed by the delta, b and b' chains.

Its subcellular location is the plastid. The protein localises to the chloroplast thylakoid membrane. F(1)F(0) ATP synthase produces ATP from ADP in the presence of a proton or sodium gradient. F-type ATPases consist of two structural domains, F(1) containing the extramembraneous catalytic core and F(0) containing the membrane proton channel, linked together by a central stalk and a peripheral stalk. During catalysis, ATP synthesis in the catalytic domain of F(1) is coupled via a rotary mechanism of the central stalk subunits to proton translocation. Functionally, component of the F(0) channel, it forms part of the peripheral stalk, linking F(1) to F(0). The chain is ATP synthase subunit b, chloroplastic from Nicotiana sylvestris (Wood tobacco).